The chain runs to 374 residues: L-serine/homoserine O-acetyltransferase (374 aa).

The region spanning 46–357 is the AB hydrolase-1 domain; sequence AVLVLTGLSP…TPAGHDAFLV (312 aa). Catalysis depends on Ser-149, which acts as the Nucleophile. Active-site residues include Asp-319 and His-352.

This sequence belongs to the AB hydrolase superfamily. MetX family. As to quaternary structure, homodimer.

It is found in the cytoplasm. The enzyme catalyses L-serine + acetyl-CoA = O-acetyl-L-serine + CoA. It carries out the reaction L-homoserine + acetyl-CoA = O-acetyl-L-homoserine + CoA. Its pathway is antibiotic biosynthesis. Involved in the biosynthesis of the antibiotic D-cycloserine (DCS), a cyclic structural analog of D-alanine, used as an antitubercular agent. Catalyzes the transfer of the acetyl group from acetyl-CoA to the hydroxyl group of L-serine to yield the activated serine, O-acetyl-L-serine. It prefers L-serine over L-homoserine. This chain is L-serine/homoserine O-acetyltransferase, found in Streptomyces lavendulae.